Consider the following 428-residue polypeptide: MITGVFSMRLWTPVGVLTSLAYCLHQRRVALAELQEADGQCPVDRSLLKLKMVQVVFRHGARSPLKPLPLEEQVEWNPQLLEVPPQTQFDYTVTNLAGGPKPYSPYDSQYHETTLKGGMFAGQLTKVGMQQMFALGERLRKNYVEDIPFLSPTFNPQEVFIRSTNIFRNLESTRCLLAGLFQCQKEGPIIIHTDEADSEVLYPNYQSCWSLRQRTRGRRQTASLQPGISEDLKKVKDRMGIDSSDKVDFFILLDNVAAEQAHNLPSCPMLKRFARMIEQRAVDTSLYILPKEDRESLQMAVGPFLHILESNLLKAMDSATAPDKIRKLYLYAAHDVTFIPLLMTLGIFDHKWPPFAVDLTMELYQHLESKEWFVQLYYHGKEQVPRGCPDGLCPLDMFLNAMSVYTLSPEKYHALCSQTQVMEVGNEE.

The transit peptide at 1–32 (MITGVFSMRLWTPVGVLTSLAYCLHQRRVALA) directs the protein to the mitochondrion. Residues 58-168 (RHGARSPLKP…VFIRSTNIFR (111 aa)) form a substrate binding region. The Nucleophile role is filled by histidine 59. Aspartate 335 acts as the Proton donor in catalysis.

The protein belongs to the histidine acid phosphatase family. As to quaternary structure, monomer. As to expression, highly expressed in kidney, heart, small intestine, muscle, liver, prostate, testis, ovary and weakly expressed in thymus and colon.

It localises to the mitochondrion. The catalysed reaction is a phosphate monoester + H2O = an alcohol + phosphate. The enzyme catalyses 1-(9Z-octadecenoyl)-sn-glycero-3-phosphate + H2O = 1-(9Z-octadecenoyl)-sn-glycerol + phosphate. Functionally, hydrolyzes lysophosphatidic acid (LPA) containing a medium length fatty acid chain to the corresponding monoacylglycerol. Has highest activity with lysophosphatidic acid containing myristate (C14:0), monounsaturated oleate (C18:1) or palmitate (C16:0), and lower activity with C18:0 and C6:0 lysophosphatidic acid. The protein is Lysophosphatidic acid phosphatase type 6 (ACP6) of Homo sapiens (Human).